Here is a 990-residue protein sequence, read N- to C-terminus: Presequence protease, mitochondrial (990 aa).

The N-terminal 25 residues, 1-25 (MLRLKSLKKPVQAVVRRFATTSAPT), are a transit peptide targeting the mitochondrion. H89 is a binding site for Zn(2+). Residue E92 is the Proton acceptor of the active site. H93 provides a ligand contact to Zn(2+). E165 is an active-site residue. E190 is a binding site for Zn(2+).

This sequence belongs to the peptidase M16 family. PreP subfamily. As to quaternary structure, monomer and homodimer; homodimerization is induced by binding of the substrate. Zn(2+) serves as cofactor.

The protein resides in the mitochondrion intermembrane space. It localises to the mitochondrion matrix. Degrades mitochondrial transit peptides after their cleavage in the intermembrane space or in the matrix, and presequence peptides; clearance of these peptides is required to keep the presequence processing machinery running. Preferentially cleaves the N-terminal side of paired basic amino acid residues. Also degrades other unstructured peptides. May function as an ATP-dependent peptidase as opposed to a metalloendopeptidase. The protein is Presequence protease, mitochondrial (CYM1) of Yarrowia lipolytica (strain CLIB 122 / E 150) (Yeast).